A 349-amino-acid polypeptide reads, in one-letter code: tRNA pseudouridine synthase D (349 aa).

Phenylalanine 26 lines the substrate pocket. Aspartate 79 (nucleophile) is an active-site residue. Asparagine 128 is a substrate binding site. The TRUD domain occupies 154-302 (GVPNYFGSQR…VEGSRRAVLL (149 aa)). A substrate-binding site is contributed by phenylalanine 328.

Belongs to the pseudouridine synthase TruD family.

It catalyses the reaction uridine(13) in tRNA = pseudouridine(13) in tRNA. In terms of biological role, responsible for synthesis of pseudouridine from uracil-13 in transfer RNAs. The sequence is that of tRNA pseudouridine synthase D from Yersinia pestis bv. Antiqua (strain Antiqua).